A 70-amino-acid chain; its full sequence is Large ribosomal subunit protein bL31 (70 aa).

4 residues coordinate Zn(2+): Cys16, Cys18, Cys37, and Cys40.

Belongs to the bacterial ribosomal protein bL31 family. Type A subfamily. As to quaternary structure, part of the 50S ribosomal subunit. It depends on Zn(2+) as a cofactor.

In terms of biological role, binds the 23S rRNA. This is Large ribosomal subunit protein bL31 from Histophilus somni (strain 2336) (Haemophilus somnus).